A 494-amino-acid polypeptide reads, in one-letter code: 3-octaprenyl-4-hydroxybenzoate carboxy-lyase (494 aa).

N172 contributes to the Mn(2+) binding site. Residues 175–177 (IYR), 189–191 (RWL), and 194–195 (RG) contribute to the prenylated FMN site. E238 contacts Mn(2+). The active-site Proton donor is D287.

The protein belongs to the UbiD family. As to quaternary structure, homohexamer. Prenylated FMN serves as cofactor. It depends on Mn(2+) as a cofactor.

Its subcellular location is the cell membrane. It catalyses the reaction a 4-hydroxy-3-(all-trans-polyprenyl)benzoate + H(+) = a 2-(all-trans-polyprenyl)phenol + CO2. It functions in the pathway cofactor biosynthesis; ubiquinone biosynthesis. Functionally, catalyzes the decarboxylation of 3-octaprenyl-4-hydroxy benzoate to 2-octaprenylphenol, an intermediate step in ubiquinone biosynthesis. The sequence is that of 3-octaprenyl-4-hydroxybenzoate carboxy-lyase from Escherichia coli O9:H4 (strain HS).